Reading from the N-terminus, the 508-residue chain is WD repeat-containing protein JIP5 (508 aa).

WD repeat units follow at residues 46 to 94, 105 to 144, 150 to 189, 194 to 234, 252 to 293, and 344 to 381; these read LATG…GVET, RHKG…VVKK, GQNV…QTNL, HNGD…EGDF, DQED…LADQ, and SKLD…QLTP. Residues 372 to 508 form a disordered region; sequence DSEKSEQLTP…THGIRRFEGL (137 aa). The span at 491–508 shows a compositional bias: basic and acidic residues; that stretch reads IKPERSMKTHGIRRFEGL.

It belongs to the WD repeat WDR55 family.

The protein resides in the nucleus. It is found in the nucleolus. This is WD repeat-containing protein JIP5 (JIP5) from Eremothecium gossypii (strain ATCC 10895 / CBS 109.51 / FGSC 9923 / NRRL Y-1056) (Yeast).